The following is a 213-amino-acid chain: Putative thiamine-phosphate synthase (213 aa).

Residues 38–42 (QLREK) and Asn70 contribute to the 4-amino-2-methyl-5-(diphosphooxymethyl)pyrimidine site. Residue Asp71 coordinates Mg(2+). Ser109 provides a ligand contact to 4-amino-2-methyl-5-(diphosphooxymethyl)pyrimidine. Residue 135–137 (TPS) coordinates 2-[(2R,5Z)-2-carboxy-4-methylthiazol-5(2H)-ylidene]ethyl phosphate. Lys138 contributes to the 4-amino-2-methyl-5-(diphosphooxymethyl)pyrimidine binding site. Residues Gly166 and 186-187 (IS) contribute to the 2-[(2R,5Z)-2-carboxy-4-methylthiazol-5(2H)-ylidene]ethyl phosphate site.

Belongs to the thiamine-phosphate synthase family. It depends on Mg(2+) as a cofactor.

The catalysed reaction is 2-[(2R,5Z)-2-carboxy-4-methylthiazol-5(2H)-ylidene]ethyl phosphate + 4-amino-2-methyl-5-(diphosphooxymethyl)pyrimidine + 2 H(+) = thiamine phosphate + CO2 + diphosphate. It carries out the reaction 2-(2-carboxy-4-methylthiazol-5-yl)ethyl phosphate + 4-amino-2-methyl-5-(diphosphooxymethyl)pyrimidine + 2 H(+) = thiamine phosphate + CO2 + diphosphate. The enzyme catalyses 4-methyl-5-(2-phosphooxyethyl)-thiazole + 4-amino-2-methyl-5-(diphosphooxymethyl)pyrimidine + H(+) = thiamine phosphate + diphosphate. Its pathway is cofactor biosynthesis; thiamine diphosphate biosynthesis; thiamine phosphate from 4-amino-2-methyl-5-diphosphomethylpyrimidine and 4-methyl-5-(2-phosphoethyl)-thiazole: step 1/1. Its function is as follows. Condenses 4-methyl-5-(beta-hydroxyethyl)thiazole monophosphate (THZ-P) and 2-methyl-4-amino-5-hydroxymethyl pyrimidine pyrophosphate (HMP-PP) to form thiamine monophosphate (TMP). This Geobacter sulfurreducens (strain ATCC 51573 / DSM 12127 / PCA) protein is Putative thiamine-phosphate synthase (thiE).